Reading from the N-terminus, the 145-residue chain is Large ribosomal subunit protein uL14m (145 aa).

Residues 1–30 constitute a mitochondrion transit peptide; that stretch reads MAFFTGLWGPFTCVSRVLSHHCFSTTGSLS.

Belongs to the universal ribosomal protein uL14 family. As to quaternary structure, component of the mitochondrial large ribosomal subunit (mt-LSU). Mature mammalian 55S mitochondrial ribosomes consist of a small (28S) and a large (39S) subunit. The 28S small subunit contains a 12S ribosomal RNA (12S mt-rRNA) and 30 different proteins. The 39S large subunit contains a 16S rRNA (16S mt-rRNA), a copy of mitochondrial valine transfer RNA (mt-tRNA(Val)), which plays an integral structural role, and 52 different proteins. Interacts with MALSU1.

It is found in the mitochondrion. Its function is as follows. Forms part of 2 intersubunit bridges in the assembled ribosome. Upon binding to MALSU1 intersubunit bridge formation is blocked, preventing ribosome formation and repressing translation. In Homo sapiens (Human), this protein is Large ribosomal subunit protein uL14m (MRPL14).